Here is a 209-residue protein sequence, read N- to C-terminus: Ribosomal RNA large subunit methyltransferase E (209 aa).

5 residues coordinate S-adenosyl-L-methionine: Gly-63, Trp-65, Asp-83, Asp-99, and Asp-124. Residue Lys-164 is the Proton acceptor of the active site.

The protein belongs to the class I-like SAM-binding methyltransferase superfamily. RNA methyltransferase RlmE family.

The protein localises to the cytoplasm. It catalyses the reaction uridine(2552) in 23S rRNA + S-adenosyl-L-methionine = 2'-O-methyluridine(2552) in 23S rRNA + S-adenosyl-L-homocysteine + H(+). Its function is as follows. Specifically methylates the uridine in position 2552 of 23S rRNA at the 2'-O position of the ribose in the fully assembled 50S ribosomal subunit. The polypeptide is Ribosomal RNA large subunit methyltransferase E (Aliivibrio salmonicida (strain LFI1238) (Vibrio salmonicida (strain LFI1238))).